Here is a 307-residue protein sequence, read N- to C-terminus: NAD(+) hydrolase TcpC (307 aa).

A helical membrane pass occupies residues 22-42; it reads YNILFFIFLSIAIPFLLFLAW. The TIR domain occupies 169-303; the sequence is THYDFFISHA…EIARELAEIA (135 aa). Residues 178–179 and E208 contribute to the NAD(+) site; that span reads AK. Residue E244 is part of the active site.

In terms of assembly, interacts with host MYD88. Interacts with host TLR4.

The protein resides in the secreted. The protein localises to the membrane. The catalysed reaction is NAD(+) + H2O = ADP-D-ribose + nicotinamide + H(+). The enzyme catalyses NADP(+) + H2O = ADP-D-ribose 2'-phosphate + nicotinamide + H(+). Functionally, virulence factor that suppresses host Toll-like receptor (TLR)-mediated cytokine production upon infection, thereby increasing bacterial burden in the urinary tract and promoting renal tissue damage. Acts as a NAD(+) hydrolase (NADase) by catalyzing cleavage of NAD(+) into ADP-D-ribose (ADPR) and nicotinamide. Also able to hydrolyze NADP(+), but not other NAD(+)-related molecules. In Escherichia coli O6:H1 (strain CFT073 / ATCC 700928 / UPEC), this protein is NAD(+) hydrolase TcpC.